The following is a 179-amino-acid chain: Large ribosomal subunit protein uL5 (179 aa).

It belongs to the universal ribosomal protein uL5 family. In terms of assembly, part of the 50S ribosomal subunit; part of the 5S rRNA/L5/L18/L25 subcomplex. Contacts the 5S rRNA and the P site tRNA. Forms a bridge to the 30S subunit in the 70S ribosome.

This is one of the proteins that bind and probably mediate the attachment of the 5S RNA into the large ribosomal subunit, where it forms part of the central protuberance. In the 70S ribosome it contacts protein S13 of the 30S subunit (bridge B1b), connecting the 2 subunits; this bridge is implicated in subunit movement. Contacts the P site tRNA; the 5S rRNA and some of its associated proteins might help stabilize positioning of ribosome-bound tRNAs. This Halothermothrix orenii (strain H 168 / OCM 544 / DSM 9562) protein is Large ribosomal subunit protein uL5.